Consider the following 581-residue polypeptide: Tricyclene synthase Oc15, chloroplastic (581 aa).

The transit peptide at 1-68 (MAFCISYVGA…ALCLNEHSLS (68 aa)) directs the protein to the chloroplast. N-linked (GlcNAc...) asparagine glycans are attached at residues N27, N206, and N319. The Mg(2+) site is built by D338 and D342. The DDXXD motif signature appears at 338-342 (DDIFD). N-linked (GlcNAc...) asparagine glycans are attached at residues N384 and N465. Residues N482, S486, and E490 each contribute to the Mg(2+) site. The N-linked (GlcNAc...) asparagine glycan is linked to N509.

Belongs to the terpene synthase family. Tpsg subfamily. Mg(2+) serves as cofactor. It depends on Mn(2+) as a cofactor. As to expression, accumulates in flowers; mostly expressed in both upper and lower petal lobes, and, to a lower extent, in tube and stamens.

The protein resides in the plastid. It is found in the chloroplast stroma. The catalysed reaction is (2E)-geranyl diphosphate = tricyclene + diphosphate. It carries out the reaction (2E)-geranyl diphosphate = beta-myrcene + diphosphate. It functions in the pathway secondary metabolite biosynthesis; terpenoid biosynthesis. Its function is as follows. Contributes to floral scent emission. This is Tricyclene synthase Oc15, chloroplastic (Oc15) from Antirrhinum majus (Garden snapdragon).